A 214-amino-acid polypeptide reads, in one-letter code: Adenylate kinase (214 aa).

Residue 10 to 15 (GAGKGT) participates in ATP binding. The tract at residues 30 to 59 (STGDMLRSAVKAGTELGLKAKALMDHGKLV) is NMP. AMP is bound by residues Thr-31, Arg-36, 57–59 (KLV), 85–88 (GFPR), and Gln-92. Residues 122–159 (GRRIHAPSGRVYHIKFNPPVVENKDDVTGEELTVRKDD) form an LID region. Residues Arg-123 and 132–133 (VY) each bind ATP. Residues Arg-156 and Arg-167 each coordinate AMP. ATP is bound at residue Arg-200.

This sequence belongs to the adenylate kinase family. As to quaternary structure, monomer.

Its subcellular location is the cytoplasm. The enzyme catalyses AMP + ATP = 2 ADP. It functions in the pathway purine metabolism; AMP biosynthesis via salvage pathway; AMP from ADP: step 1/1. Its function is as follows. Catalyzes the reversible transfer of the terminal phosphate group between ATP and AMP. Plays an important role in cellular energy homeostasis and in adenine nucleotide metabolism. The chain is Adenylate kinase from Photorhabdus laumondii subsp. laumondii (strain DSM 15139 / CIP 105565 / TT01) (Photorhabdus luminescens subsp. laumondii).